A 458-amino-acid chain; its full sequence is ATP synthase subunit beta (458 aa).

148–155 contacts ATP; the sequence is GGAGVGKT.

It belongs to the ATPase alpha/beta chains family. F-type ATPases have 2 components, CF(1) - the catalytic core - and CF(0) - the membrane proton channel. CF(1) has five subunits: alpha(3), beta(3), gamma(1), delta(1), epsilon(1). CF(0) has three main subunits: a(1), b(2) and c(9-12). The alpha and beta chains form an alternating ring which encloses part of the gamma chain. CF(1) is attached to CF(0) by a central stalk formed by the gamma and epsilon chains, while a peripheral stalk is formed by the delta and b chains.

The protein localises to the cell inner membrane. The catalysed reaction is ATP + H2O + 4 H(+)(in) = ADP + phosphate + 5 H(+)(out). Produces ATP from ADP in the presence of a proton gradient across the membrane. The catalytic sites are hosted primarily by the beta subunits. This Shewanella halifaxensis (strain HAW-EB4) protein is ATP synthase subunit beta.